The sequence spans 120 residues: Ribonuclease P protein component (120 aa).

This sequence belongs to the RnpA family. Consists of a catalytic RNA component (M1 or rnpB) and a protein subunit.

The catalysed reaction is Endonucleolytic cleavage of RNA, removing 5'-extranucleotides from tRNA precursor.. In terms of biological role, RNaseP catalyzes the removal of the 5'-leader sequence from pre-tRNA to produce the mature 5'-terminus. It can also cleave other RNA substrates such as 4.5S RNA. The protein component plays an auxiliary but essential role in vivo by binding to the 5'-leader sequence and broadening the substrate specificity of the ribozyme. The protein is Ribonuclease P protein component of Mycobacterium marinum (strain ATCC BAA-535 / M).